The chain runs to 207 residues: Thymidylate kinase (207 aa).

The tract at residues 11 to 49 (EGIDGSGKSTQARRLAEHLRDTGRDPLLTREPGGSPGAE) is disordered. Residue 12–19 (GIDGSGKS) participates in ATP binding. Over residues 24-38 (RLAEHLRDTGRDPLL) the composition is skewed to basic and acidic residues.

It belongs to the thymidylate kinase family.

The catalysed reaction is dTMP + ATP = dTDP + ADP. In terms of biological role, phosphorylation of dTMP to form dTDP in both de novo and salvage pathways of dTTP synthesis. This Dinoroseobacter shibae (strain DSM 16493 / NCIMB 14021 / DFL 12) protein is Thymidylate kinase.